Here is a 419-residue protein sequence, read N- to C-terminus: Gustatory receptor for bitter taste 93a (419 aa).

The Cytoplasmic portion of the chain corresponds to 1–55 (MFSSSSAMTGKRAESWSRLLLLWLYRCARGLLVLSSSLDRDKLQLKATKQGSRNR). The helical transmembrane segment at 56 to 76 (FLHILWRCIVVMIYAGLWPML) threads the bilayer. Residues 77-90 (TSAVIGKRLESYAD) lie on the Extracellular side of the membrane. Residues 91-111 (VLALAQSMSVSILAVISFVIQ) form a helical membrane-spanning segment. Over 112 to 145 (ARGENQFREVLNRYLALYQRICLTTRLRHLFPTK) the chain is Cytoplasmic. A helical membrane pass occupies residues 146 to 166 (FVVFFLLKLFFTLCGCFHEII). The Extracellular segment spans residues 167–184 (PLFENSHFDDISQMVGTG). The helical transmembrane segment at 185-205 (FGIYMWLGTLCVLDACFLGFL) threads the bilayer. Over 206 to 277 (VSGILYEHMA…NSFRRILQWQ (72 aa)) the chain is Cytoplasmic. Residues 278–298 (ILFYIYLNFINICLMLYQYIL) traverse the membrane as a helical segment. At 299-305 (HFLNDDE) the chain is on the extracellular side. Residues 306–326 (VVFVSIVMAFVKLANLVLLMM) form a helical membrane-spanning segment. Over 327–383 (CADYTVRQSEVPKKLPLDIVCSDMDERWDKSVETFLGQLQTQRLEIKVLGFFHLNNE) the chain is Cytoplasmic. A helical membrane pass occupies residues 384–404 (FILLILSAIISYLFILIQFGI). Over 405–419 (TGGFEASEDIKNRFD) the chain is Extracellular.

This sequence belongs to the insect chemoreceptor superfamily. Gustatory receptor (GR) family. Gr93a subfamily. In larvae, is expressed in neurons of the dorsal pharyngeal sense organs.

It localises to the cell membrane. Functionally, gustatory receptor required for response to the bitter in taste neurons. Gr93a cells respond to bitter compounds such as caffeine. Flies avoid bitter substances, suggesting that Gr93a neuron activity is sufficient to mediate avoidance behavior. The sequence is that of Gustatory receptor for bitter taste 93a (Gr93a) from Drosophila melanogaster (Fruit fly).